The chain runs to 90 residues: MKTAIFTVVLALAVFAVLSFGWEANEKALSEEFTELIHEKGAASETEARECRYFWGECHDHMPCCDWLVCRYKWPITYNICVWNRTFPEK.

An N-terminal signal peptide occupies residues M1–S19. Residues F20–E50 constitute a propeptide that is removed on maturation. 3 cysteine pairs are disulfide-bonded: C51–C65, C58–C70, and C64–C81.

Belongs to the neurotoxin 10 (Hwtx-1) family. 13 (Hntx-13) subfamily. In terms of tissue distribution, expressed by the venom gland.

Its subcellular location is the secreted. In terms of biological role, ion channel inhibitor. In Cyriopagopus hainanus (Chinese bird spider), this protein is U7-theraphotoxin-Hhn1a 8.